We begin with the raw amino-acid sequence, 329 residues long: Deoxyhypusine hydroxylase (329 aa).

4 HEAT-like PBS-type repeats span residues 65-91 (LKHE…VLED), 99-124 (RHEA…MRDD), 232-258 (FRHE…ALSN), and 265-292 (VRHE…FLND). Fe cation is bound by residues His-67, Glu-68, His-100, Glu-101, His-234, Glu-235, His-267, and Glu-268.

It belongs to the deoxyhypusine hydroxylase family. The cofactor is Fe(2+).

The protein localises to the cytoplasm. It is found in the nucleus. The catalysed reaction is [eIF5A protein]-deoxyhypusine + AH2 + O2 = [eIF5A protein]-hypusine + A + H2O. It participates in protein modification; eIF5A hypusination. In terms of biological role, catalyzes the hydroxylation of the N(6)-(4-aminobutyl)-L-lysine intermediate to form hypusine, an essential post-translational modification only found in mature eIF-5A factor. This Phaeosphaeria nodorum (strain SN15 / ATCC MYA-4574 / FGSC 10173) (Glume blotch fungus) protein is Deoxyhypusine hydroxylase.